A 413-amino-acid polypeptide reads, in one-letter code: Floricaula/leafy homolog 1 (413 aa).

Disordered stretches follow at residues 154–177 (EGLS…GGTT) and 191–239 (QRRR…RQRE). Residues 201 to 210 (GRERRGRASA) show a composition bias toward basic and acidic residues. A compositionally biased stretch (acidic residues) spans 211 to 225 (EEDEETEEGQEDEWN). DNA-binding regions lie at residues 238-242 (REHPF), 307-314 (NKPKMRHY), and 378-381 (YVPT).

Belongs to the FLO/LFY family. Expressed in floral meristems and in indeterminate vegetative meristems.

The protein localises to the nucleus. Its function is as follows. Probable transcription factor that act to specify determinacy in the progenitor cells for both flowers and leaves. The chain is Floricaula/leafy homolog 1 (FL1) from Nicotiana tabacum (Common tobacco).